The chain runs to 361 residues: tRNA-specific 2-thiouridylase MnmA (361 aa).

Residues 8-15 and Met34 contribute to the ATP site; that span reads GMSGGVDS. The tract at residues 94 to 96 is interaction with target base in tRNA; that stretch reads NPD. The active-site Nucleophile is the Cys99. Cys99 and Cys195 form a disulfide bridge. ATP is bound at residue Gly123. The tract at residues 145 to 147 is interaction with tRNA; sequence KDQ. Cys195 (cysteine persulfide intermediate) is an active-site residue. The tract at residues 307–308 is interaction with tRNA; sequence RY.

The protein belongs to the MnmA/TRMU family.

The protein localises to the cytoplasm. It carries out the reaction S-sulfanyl-L-cysteinyl-[protein] + uridine(34) in tRNA + AH2 + ATP = 2-thiouridine(34) in tRNA + L-cysteinyl-[protein] + A + AMP + diphosphate + H(+). Catalyzes the 2-thiolation of uridine at the wobble position (U34) of tRNA, leading to the formation of s(2)U34. The chain is tRNA-specific 2-thiouridylase MnmA from Legionella pneumophila (strain Paris).